Reading from the N-terminus, the 421-residue chain is MDKLIITGGNRLDGEIRISGAKNSALPILAATLLADTPVTVCNLPHLHDITTMIELFGRMGVQPIIDEKLNVEVDASSIKTLVAPYELVKTMRASILVLGPMLARFGEAEVALPGGCAIGSRPVDLHIRGLEAMGAQIEVEGGYIKAKAPAGGLRGGHFFFDTVSVTGTENLMMAAALANGRTVLQNAAREPEVVDLANCLNAMGANVQGAGSDTIVIEGVKRLGGARYDVLPDRIETGTYLVAAAATGGRVKLKDTDPTILEAVLQKLEEAGAHISTGSNWIELDMKGNRPKAVNVRTAPYPAFPTDMQAQFISMNAVAEGTGAVIETVFENRFMHVYEMNRMGAQILVEGNTAIVTGVPKLKGAPVMATDLRASASLVIAGLVAEGDTLIDRIYHIDRGYECIEEKLQLLGAKIRRVPG.

Position 22–23 (Lys-22–Asn-23) interacts with phosphoenolpyruvate. UDP-N-acetyl-alpha-D-glucosamine is bound at residue Arg-93. Catalysis depends on Cys-117, which acts as the Proton donor. Cys-117 carries the 2-(S-cysteinyl)pyruvic acid O-phosphothioketal modification. Residues Arg-122–Leu-126, Asp-308, and Val-330 each bind UDP-N-acetyl-alpha-D-glucosamine.

It belongs to the EPSP synthase family. MurA subfamily.

The protein resides in the cytoplasm. It catalyses the reaction phosphoenolpyruvate + UDP-N-acetyl-alpha-D-glucosamine = UDP-N-acetyl-3-O-(1-carboxyvinyl)-alpha-D-glucosamine + phosphate. The protein operates within cell wall biogenesis; peptidoglycan biosynthesis. Functionally, cell wall formation. Adds enolpyruvyl to UDP-N-acetylglucosamine. The chain is UDP-N-acetylglucosamine 1-carboxyvinyltransferase from Pseudomonas aeruginosa (strain LESB58).